The primary structure comprises 667 residues: Heat shock protein DDB_G0283913 (667 aa).

Transmembrane regions (helical) follow at residues 2–22 and 224–244; these read FVGT…KKIL and MFIC…LNEL. A coiled-coil region spans residues 18-82; sequence IKKILKRKKE…ELAKKLNCYI (65 aa). A disordered region spans residues 432–478; the sequence is IDDTIQDNDKSGSEVSTPTISSSSSSPLQPIIKDEKDDNIENKSDEA. Residues 444–457 show a composition bias toward low complexity; the sequence is SEVSTPTISSSSSS. Residues 463-477 show a composition bias toward basic and acidic residues; sequence IKDEKDDNIENKSDE. Positions 551–667 constitute a sHSP domain; the sequence is MVFSSGFKPF…VITFKFEKIG (117 aa).

The protein belongs to the small heat shock protein (HSP20) family.

The protein resides in the membrane. The protein is Heat shock protein DDB_G0283913 of Dictyostelium discoideum (Social amoeba).